Consider the following 254-residue polypeptide: N-acetylglucosaminyldiphosphoundecaprenol N-acetyl-beta-D-mannosaminyltransferase (254 aa).

Belongs to the glycosyltransferase 26 family. TagA/TarA subfamily.

The catalysed reaction is UDP-N-acetyl-alpha-D-mannosamine + N-acetyl-alpha-D-glucosaminyl-di-trans,octa-cis-undecaprenyl diphosphate = N-acetyl-beta-D-mannosaminyl-(1-&gt;4)-N-acetyl-alpha-D-glucosaminyl di-trans,octa-cis-undecaprenyl diphosphate + UDP + H(+). Its pathway is cell wall biogenesis; poly(ribitol phosphate) teichoic acid biosynthesis. Functionally, catalyzes the conversion of GlcNAc-PP-undecaprenol into ManNAc-GlcNAc-PP-undecaprenol, the first committed lipid intermediate in the de novo synthesis of teichoic acid. This chain is N-acetylglucosaminyldiphosphoundecaprenol N-acetyl-beta-D-mannosaminyltransferase, found in Staphylococcus aureus (strain NCTC 8325 / PS 47).